A 311-amino-acid polypeptide reads, in one-letter code: Solute carrier family 25 member 48 (311 aa).

3 Solcar repeats span residues 3–86 (NFQL…TQRF), 100–205 (PHVL…LSDW), and 214–301 (PSPC…SLQA). 6 consecutive transmembrane segments (helical) span residues 9 to 29 (FVAG…LDTV), 61 to 81 (GMSF…GVFS), 107 to 127 (LLAS…VDLI), 193 to 213 (CLYF…ACAG), 217 to 237 (CAVW…ATPM), and 277 to 295 (ITVN…FLGY).

The protein belongs to the mitochondrial carrier (TC 2.A.29) family.

It is found in the mitochondrion inner membrane. The polypeptide is Solute carrier family 25 member 48 (SLC25A48) (Bos taurus (Bovine)).